Reading from the N-terminus, the 288-residue chain is Shikimate dehydrogenase (NADP(+)) (288 aa).

Residues 21-23 (SLS) and Thr68 contribute to the shikimate site. Lys72 (proton acceptor) is an active-site residue. Shikimate-binding residues include Asn93 and Asp108. Residues 132-136 (GNGGA) and Leu230 each bind NADP(+). Residue Tyr232 participates in shikimate binding. Gly253 is a binding site for NADP(+).

This sequence belongs to the shikimate dehydrogenase family. Homodimer.

The enzyme catalyses shikimate + NADP(+) = 3-dehydroshikimate + NADPH + H(+). It functions in the pathway metabolic intermediate biosynthesis; chorismate biosynthesis; chorismate from D-erythrose 4-phosphate and phosphoenolpyruvate: step 4/7. Involved in the biosynthesis of the chorismate, which leads to the biosynthesis of aromatic amino acids. Catalyzes the reversible NADPH linked reduction of 3-dehydroshikimate (DHSA) to yield shikimate (SA). This is Shikimate dehydrogenase (NADP(+)) from Crocosphaera subtropica (strain ATCC 51142 / BH68) (Cyanothece sp. (strain ATCC 51142)).